The sequence spans 319 residues: MITFLPIIFSILIVVIFVIGNFANGFIALVNSIEWVKRQKISFVDQILTALAVSRVGLLWVLLLHWYATQLNPAFYSVEVRITAYNVWAVTNHFSSWLATSLSMFYLLRIANFSNLIFLRIKRRVKSVVLVILLGPLLFLVCHLFVINMDETVWTKEYEGNVTWKIKLRSAMYHSNMTLTMLANFVPLTLTLISFLLLICSLCKHLKKMQLHGKGSQDPSTKVHIKALQTVTSFLLLCAIYFLSMIISVCNFGRLEKQPVFMFCQAIIFSYPSTHPFILILGNKKLKQIFLSVLRHVRYWVKDRSLRLHRFTRGALCVF.

A topological domain (extracellular) is located at residue M1. The helical transmembrane segment at I2 to F22 threads the bilayer. The Cytoplasmic segment spans residues A23–Q46. The chain crosses the membrane as a helical span at residues I47–Y67. Residues A68–N86 are Extracellular-facing. The chain crosses the membrane as a helical span at residues V87 to L107. Topologically, residues L108–K126 are cytoplasmic. Residues S127 to I147 traverse the membrane as a helical segment. Over N148–T178 the chain is Extracellular. N-linked (GlcNAc...) asparagine glycosylation is found at N161 and N176. A helical membrane pass occupies residues L179–I199. At C200–Q229 the chain is on the cytoplasmic side. Residues T230–C250 traverse the membrane as a helical segment. Topologically, residues N251–P259 are extracellular. Residues V260–I280 traverse the membrane as a helical segment. Over L281–F319 the chain is Cytoplasmic.

Belongs to the G-protein coupled receptor T2R family. In terms of tissue distribution, expressed in subsets of taste receptor cells of the tongue and exclusively in gustducin-positive cells.

Its subcellular location is the membrane. In terms of biological role, receptor that may play a role in the perception of bitterness and is gustducin-linked. May play a role in sensing the chemical composition of the gastrointestinal content. The activity of this receptor may stimulate alpha gustducin, mediate PLC-beta-2 activation and lead to the gating of TRPM5. The sequence is that of Taste receptor type 2 member 30 (TAS2R30) from Homo sapiens (Human).